The sequence spans 230 residues: uncharacterized protein (230 aa).

A run of 7 helical transmembrane segments spans residues 34–54, 56–76, 87–107, 111–131, 146–166, 167–187, and 205–225; these read FFAG…MNFQ, VVQY…GLMF, MLFA…GMVI, GLGA…LMSV, MLFI…FLGS, PMFQ…YIAY, and VSLY…IGIF.

Belongs to the BI1 family.

It is found in the cell membrane. This is an uncharacterized protein from Helicobacter pylori (strain J99 / ATCC 700824) (Campylobacter pylori J99).